The sequence spans 278 residues: ATP-dependent dethiobiotin synthetase BioD 1 (278 aa).

ATP is bound at residue 51–56; that stretch reads NVGKTI. Position 55 (Thr-55) interacts with Mg(2+). Lys-76 is an active-site residue. Position 102 (Asp-102) interacts with ATP. Residues Asp-102 and Glu-163 each contribute to the Mg(2+) site. ATP-binding positions include 223 to 224 and 252 to 254; these read NR and PYI.

Belongs to the dethiobiotin synthetase family. As to quaternary structure, homodimer. Requires Mg(2+) as cofactor.

It is found in the cytoplasm. The enzyme catalyses (7R,8S)-7,8-diammoniononanoate + CO2 + ATP = (4R,5S)-dethiobiotin + ADP + phosphate + 3 H(+). It participates in cofactor biosynthesis; biotin biosynthesis; biotin from 7,8-diaminononanoate: step 1/2. In terms of biological role, catalyzes a mechanistically unusual reaction, the ATP-dependent insertion of CO2 between the N7 and N8 nitrogen atoms of 7,8-diaminopelargonic acid (DAPA, also called 7,8-diammoniononanoate) to form a ureido ring. The chain is ATP-dependent dethiobiotin synthetase BioD 1 from Haemophilus ducreyi (strain 35000HP / ATCC 700724).